Consider the following 450-residue polypeptide: Phosphoglucosamine mutase (450 aa).

Residue Ser107 is the Phosphoserine intermediate of the active site. Mg(2+)-binding residues include Ser107, Asp246, Asp248, and Asp250. At Ser107 the chain carries Phosphoserine.

It belongs to the phosphohexose mutase family. Mg(2+) serves as cofactor. Post-translationally, activated by phosphorylation.

It carries out the reaction alpha-D-glucosamine 1-phosphate = D-glucosamine 6-phosphate. Catalyzes the conversion of glucosamine-6-phosphate to glucosamine-1-phosphate. In Aromatoleum aromaticum (strain DSM 19018 / LMG 30748 / EbN1) (Azoarcus sp. (strain EbN1)), this protein is Phosphoglucosamine mutase.